We begin with the raw amino-acid sequence, 547 residues long: Probable bifunctional tRNA threonylcarbamoyladenosine biosynthesis protein (547 aa).

A kae1 region spans residues 1–329 (MGNSNELICI…FRTDMVDVNW (329 aa)). Fe cation-binding residues include His112, His116, and Tyr133. Residues 133-137 (YVSGG), Asp165, Gly178, Glu182, and Asn262 contribute to the L-threonylcarbamoyladenylate site. Position 290 (Asp290) interacts with Fe cation. A Protein kinase domain is found at 346–547 (QIPRHLIGKG…KEVEKRGRYL (202 aa)). ATP is bound by residues 352–360 (IGKGAEADI) and Lys373. Asp465 (proton acceptor; for kinase activity) is an active-site residue.

The protein in the N-terminal section; belongs to the KAE1 / TsaD family. In the C-terminal section; belongs to the protein kinase superfamily. Tyr protein kinase family. BUD32 subfamily. In terms of assembly, component of the KEOPS complex that consists of Kae1, Bud32, Cgi121 and Pcc1; the whole complex dimerizes. Fe(2+) is required as a cofactor.

The protein resides in the cytoplasm. It carries out the reaction L-seryl-[protein] + ATP = O-phospho-L-seryl-[protein] + ADP + H(+). The catalysed reaction is L-threonyl-[protein] + ATP = O-phospho-L-threonyl-[protein] + ADP + H(+). The enzyme catalyses L-threonylcarbamoyladenylate + adenosine(37) in tRNA = N(6)-L-threonylcarbamoyladenosine(37) in tRNA + AMP + H(+). Its function is as follows. Required for the formation of a threonylcarbamoyl group on adenosine at position 37 (t(6)A37) in tRNAs that read codons beginning with adenine. Is a component of the KEOPS complex that is probably involved in the transfer of the threonylcarbamoyl moiety of threonylcarbamoyl-AMP (TC-AMP) to the N6 group of A37. The Kae1 domain likely plays a direct catalytic role in this reaction. The Bud32 domain probably displays kinase activity that regulates Kae1 function. This is Probable bifunctional tRNA threonylcarbamoyladenosine biosynthesis protein from Methanococcus vannielii (strain ATCC 35089 / DSM 1224 / JCM 13029 / OCM 148 / SB).